The chain runs to 132 residues: Small ribosomal subunit protein uS8 (132 aa).

The protein belongs to the universal ribosomal protein uS8 family. In terms of assembly, part of the 30S ribosomal subunit. Contacts proteins S5 and S12.

Functionally, one of the primary rRNA binding proteins, it binds directly to 16S rRNA central domain where it helps coordinate assembly of the platform of the 30S subunit. The sequence is that of Small ribosomal subunit protein uS8 from Pediococcus pentosaceus (strain ATCC 25745 / CCUG 21536 / LMG 10740 / 183-1w).